The primary structure comprises 646 residues: uncharacterized protein (646 aa).

The next 10 membrane-spanning stretches (helical) occupy residues 20–40 (AYFLSCVFAVSVFFVFTSFIF), 54–74 (LVKTCLSAALVVIIVFCIFFI), 115–135 (LAAIAAGIGAGLLFSKLFFMI), 154–174 (AFVMTIAGFLILFQTLLILSL), 203–223 (TVLSLLCLGSGYYLSATANAI), 232–252 (ILILVLIGTYFFFTQSSVAFF), 285–305 (LFLTSVITAVILTATGVIYMF), 523–543 (GVALMLFIGLFVSVLFFIVQG), 582–602 (IGFLFFIPFIAGTIHAGFAYA), and 613–633 (FLEAVIVIFIYFVFQALYYIV).

The protein belongs to the ABC-4 integral membrane protein family.

It localises to the cell membrane. This is an uncharacterized protein from Bacillus subtilis (strain 168).